The primary structure comprises 264 residues: tRNA (guanine-N(1)-)-methyltransferase (264 aa).

Residues Gly125 and 145–150 (LGDFVL) contribute to the S-adenosyl-L-methionine site.

Belongs to the RNA methyltransferase TrmD family. As to quaternary structure, homodimer.

It is found in the cytoplasm. The catalysed reaction is guanosine(37) in tRNA + S-adenosyl-L-methionine = N(1)-methylguanosine(37) in tRNA + S-adenosyl-L-homocysteine + H(+). Its function is as follows. Specifically methylates guanosine-37 in various tRNAs. This chain is tRNA (guanine-N(1)-)-methyltransferase, found in Burkholderia cenocepacia (strain HI2424).